The chain runs to 221 residues: ATP-dependent dethiobiotin synthetase BioD (221 aa).

G11–Y16 provides a ligand contact to ATP. Residue T15 coordinates Mg(2+). Residue K36 is part of the active site. T40 contacts substrate. ATP-binding positions include D48 and E107 to G110. Mg(2+) is bound by residues D48 and E107.

This sequence belongs to the dethiobiotin synthetase family. Homodimer. Requires Mg(2+) as cofactor.

It localises to the cytoplasm. It carries out the reaction (7R,8S)-7,8-diammoniononanoate + CO2 + ATP = (4R,5S)-dethiobiotin + ADP + phosphate + 3 H(+). Its pathway is cofactor biosynthesis; biotin biosynthesis; biotin from 7,8-diaminononanoate: step 1/2. Its function is as follows. Catalyzes a mechanistically unusual reaction, the ATP-dependent insertion of CO2 between the N7 and N8 nitrogen atoms of 7,8-diaminopelargonic acid (DAPA, also called 7,8-diammoniononanoate) to form a ureido ring. In Hydrogenobaculum sp. (strain Y04AAS1), this protein is ATP-dependent dethiobiotin synthetase BioD.